The chain runs to 565 residues: DNA mismatch repair protein MutL (565 aa).

Belongs to the DNA mismatch repair MutL/HexB family.

Functionally, this protein is involved in the repair of mismatches in DNA. It is required for dam-dependent methyl-directed DNA mismatch repair. May act as a 'molecular matchmaker', a protein that promotes the formation of a stable complex between two or more DNA-binding proteins in an ATP-dependent manner without itself being part of a final effector complex. The protein is DNA mismatch repair protein MutL of Desulforudis audaxviator (strain MP104C).